The following is a 514-amino-acid chain: 2-isopropylmalate synthase (514 aa).

The Pyruvate carboxyltransferase domain occupies Ile5 to Thr267. 4 residues coordinate Mn(2+): Asp14, His202, His204, and Asn238. The regulatory domain stretch occupies residues Lys392–Asn514.

This sequence belongs to the alpha-IPM synthase/homocitrate synthase family. LeuA type 1 subfamily. In terms of assembly, homodimer. It depends on Mn(2+) as a cofactor.

The protein resides in the cytoplasm. It carries out the reaction 3-methyl-2-oxobutanoate + acetyl-CoA + H2O = (2S)-2-isopropylmalate + CoA + H(+). It functions in the pathway amino-acid biosynthesis; L-leucine biosynthesis; L-leucine from 3-methyl-2-oxobutanoate: step 1/4. In terms of biological role, catalyzes the condensation of the acetyl group of acetyl-CoA with 3-methyl-2-oxobutanoate (2-ketoisovalerate) to form 3-carboxy-3-hydroxy-4-methylpentanoate (2-isopropylmalate). In Clostridium kluyveri (strain NBRC 12016), this protein is 2-isopropylmalate synthase.